Here is a 378-residue protein sequence, read N- to C-terminus: Pyrimidine monooxygenase RutA (378 aa).

FMN contacts are provided by residues 65 to 66, N131, E140, 156 to 157, and S206; these read IK and RY.

This sequence belongs to the NtaA/SnaA/DszA monooxygenase family. RutA subfamily.

The enzyme catalyses uracil + FMNH2 + NADH + O2 = (Z)-3-ureidoacrylate + FMN + NAD(+) + H2O + H(+). It catalyses the reaction thymine + FMNH2 + NADH + O2 = (Z)-2-methylureidoacrylate + FMN + NAD(+) + H2O + H(+). Functionally, catalyzes the pyrimidine ring opening between N-3 and C-4 by an unusual flavin hydroperoxide-catalyzed mechanism, adding oxygen atoms in the process to yield ureidoacrylate peracid, that immediately reacts with FMN forming ureidoacrylate and FMN-N(5)-oxide. The FMN-N(5)-oxide reacts spontaneously with NADH to produce FMN. Requires the flavin reductase RutF to regenerate FMN in vivo. In Cronobacter turicensis (strain DSM 18703 / CCUG 55852 / LMG 23827 / z3032), this protein is Pyrimidine monooxygenase RutA.